Consider the following 215-residue polypeptide: Pyrrolidone-carboxylate peptidase (215 aa).

Active-site residues include E80, C143, and H167.

Belongs to the peptidase C15 family. In terms of assembly, homotetramer.

It is found in the cytoplasm. It catalyses the reaction Release of an N-terminal pyroglutamyl group from a polypeptide, the second amino acid generally not being Pro.. In terms of biological role, removes 5-oxoproline from various penultimate amino acid residues except L-proline. This is Pyrrolidone-carboxylate peptidase from Brevibacillus brevis (strain 47 / JCM 6285 / NBRC 100599).